The primary structure comprises 86 residues: Weak neurotoxin 10 (86 aa).

The N-terminal stretch at 1-21 (MKTLLLTLVVVTIVCLDLGYT) is a signal peptide. Intrachain disulfides connect Cys24–Cys45, Cys27–Cys32, Cys38–Cys63, Cys67–Cys78, and Cys79–Cys84.

This sequence belongs to the three-finger toxin family. Ancestral subfamily. Orphan group II sub-subfamily. In terms of tissue distribution, expressed by the venom gland.

Its subcellular location is the secreted. Binds with low affinity to muscular (alpha-1-beta-1-delta-epsilon/CHRNA1-CHRNB1-CHRND-CHRNE) and very low affinity to neuronal (alpha-7/CHRNA7) nicotinic acetylcholine receptor (nAChR). This chain is Weak neurotoxin 10 (WNTX10), found in Naja sputatrix (Malayan spitting cobra).